A 435-amino-acid chain; its full sequence is Methylenetetrahydrofolate--tRNA-(uracil-5-)-methyltransferase TrmFO (435 aa).

Residue G10 to G15 participates in FAD binding.

Belongs to the MnmG family. TrmFO subfamily. The cofactor is FAD.

It localises to the cytoplasm. The enzyme catalyses uridine(54) in tRNA + (6R)-5,10-methylene-5,6,7,8-tetrahydrofolate + NADH + H(+) = 5-methyluridine(54) in tRNA + (6S)-5,6,7,8-tetrahydrofolate + NAD(+). It carries out the reaction uridine(54) in tRNA + (6R)-5,10-methylene-5,6,7,8-tetrahydrofolate + NADPH + H(+) = 5-methyluridine(54) in tRNA + (6S)-5,6,7,8-tetrahydrofolate + NADP(+). Functionally, catalyzes the folate-dependent formation of 5-methyl-uridine at position 54 (M-5-U54) in all tRNAs. This Bacillus velezensis (strain DSM 23117 / BGSC 10A6 / LMG 26770 / FZB42) (Bacillus amyloliquefaciens subsp. plantarum) protein is Methylenetetrahydrofolate--tRNA-(uracil-5-)-methyltransferase TrmFO.